The sequence spans 140 residues: FLYWCH family member 2 (140 aa).

Disordered regions lie at residues 1 to 39 (MPLP…PRKF) and 84 to 140 (HPEA…GKSL). Phosphoserine is present on Ser21. The span at 98 to 114 (PEQKRSRQDPGTDRTED) shows a compositional bias: basic and acidic residues. Positions 118–127 (AAGPPEAAGE) are enriched in low complexity.

This is FLYWCH family member 2 (FLYWCH2) from Homo sapiens (Human).